The following is a 147-amino-acid chain: Hemoglobin subunit gamma (147 aa).

Residues 3–147 (YFTAEEKAAI…VASALARKYH (145 aa)) form the Globin domain. Histidine 64 and histidine 93 together coordinate heme b.

Belongs to the globin family. Heterotetramer of two alpha chains and two gamma chains in fetal hemoglobin (Hb F). Red blood cells.

Gamma chains make up the fetal hemoglobin F, in combination with alpha chains. The polypeptide is Hemoglobin subunit gamma (HBG) (Dugong dugon (Dugong)).